Here is a 228-residue protein sequence, read N- to C-terminus: Protein N-lysine methyltransferase METTL21D (228 aa).

An N-acetylalanine modification is found at A2. Residues W43, 75 to 77 (GSG), D96, W126, A142, and Y147 each bind S-adenosyl-L-methionine.

Belongs to the methyltransferase superfamily. METTL21 family. As to quaternary structure, interacts with ALKBH6. Interacts with ASPSCR1 and UBXN6; interaction with ASPSCR1, but not with UBXN6, enhances VCP methylation. Widely expressed.

The protein resides in the cytoplasm. It catalyses the reaction L-lysyl-[protein] + 3 S-adenosyl-L-methionine = N(6),N(6),N(6)-trimethyl-L-lysyl-[protein] + 3 S-adenosyl-L-homocysteine + 3 H(+). In terms of biological role, protein N-lysine methyltransferase that specifically trimethylates 'Lys-315' of VCP/p97; this modification may decrease VCP ATPase activity. In Mus musculus (Mouse), this protein is Protein N-lysine methyltransferase METTL21D (Vcpkmt).